Consider the following 181-residue polypeptide: CDP-diacylglycerol--glycerol-3-phosphate 3-phosphatidyltransferase (181 aa).

4 helical membrane passes run 8 to 28 (PNYL…AFYI), 35 to 55 (KLGA…GYIA), 64 to 84 (FGKM…IIML), and 148 to 168 (IIYL…LTII).

The protein belongs to the CDP-alcohol phosphatidyltransferase class-I family.

It is found in the cell membrane. The catalysed reaction is a CDP-1,2-diacyl-sn-glycerol + sn-glycerol 3-phosphate = a 1,2-diacyl-sn-glycero-3-phospho-(1'-sn-glycero-3'-phosphate) + CMP + H(+). It functions in the pathway phospholipid metabolism; phosphatidylglycerol biosynthesis; phosphatidylglycerol from CDP-diacylglycerol: step 1/2. In terms of biological role, this protein catalyzes the committed step to the synthesis of the acidic phospholipids. The sequence is that of CDP-diacylglycerol--glycerol-3-phosphate 3-phosphatidyltransferase (pgsA) from Rickettsia felis (strain ATCC VR-1525 / URRWXCal2) (Rickettsia azadi).